Here is a 509-residue protein sequence, read N- to C-terminus: Cytochrome P450 monooxygenase alt3 (509 aa).

The helical transmembrane segment at 25-45 (IITGIIVLPVLYVLLKVIYNL) threads the bilayer. Position 450 (C450) interacts with heme.

Belongs to the cytochrome P450 family. It depends on heme as a cofactor.

Its subcellular location is the membrane. It functions in the pathway secondary metabolite biosynthesis. In terms of biological role, cytochrome P450 monooxygenase; part of the gene cluster that mediates the biosynthesis of alternapyrone derivatives. Alternapyrone is a decaketide with octa-methylation from methionine on every C2 unit except the third unit. All the domains in the polyketide synthase alt5 are apparently involved in alternapyrone synthesis, that is, the 8 CMeT, 7 KR, 7 DH, and 4 ER reactions in the 9 KS-mediated condensation steps required for alternapyrone synthesis. the alternapyrone produced by alt5 might be intensively modified by cytochrome P450 monooxygenases alt1, alt2 and alt3 and FAD-dependent oxidoreductase alt4 present in the alt gene cluster. The chain is Cytochrome P450 monooxygenase alt3 from Alternaria solani.